The sequence spans 101 residues: Large ribosomal subunit protein uL23 (101 aa).

This sequence belongs to the universal ribosomal protein uL23 family. As to quaternary structure, part of the 50S ribosomal subunit. Contacts protein L29, and trigger factor when it is bound to the ribosome.

Its function is as follows. One of the early assembly proteins it binds 23S rRNA. One of the proteins that surrounds the polypeptide exit tunnel on the outside of the ribosome. Forms the main docking site for trigger factor binding to the ribosome. The protein is Large ribosomal subunit protein uL23 of Micrococcus luteus (strain ATCC 4698 / DSM 20030 / JCM 1464 / CCM 169 / CCUG 5858 / IAM 1056 / NBRC 3333 / NCIMB 9278 / NCTC 2665 / VKM Ac-2230) (Micrococcus lysodeikticus).